A 320-amino-acid chain; its full sequence is Pseudouridine-5'-phosphate glycosidase (320 aa).

The active-site Proton donor is Glu-25. Positions 85 and 105 each coordinate substrate. Asp-137 contacts Mn(2+). 139–141 (SAD) serves as a coordination point for substrate. Lys-158 functions as the Nucleophile in the catalytic mechanism.

The protein belongs to the pseudouridine-5'-phosphate glycosidase family. As to quaternary structure, homotrimer. The cofactor is Mn(2+).

It catalyses the reaction D-ribose 5-phosphate + uracil = psi-UMP + H2O. Catalyzes the reversible cleavage of pseudouridine 5'-phosphate (PsiMP) to ribose 5-phosphate and uracil. Functions biologically in the cleavage direction, as part of a pseudouridine degradation pathway. The polypeptide is Pseudouridine-5'-phosphate glycosidase (Rhodospirillum centenum (strain ATCC 51521 / SW)).